Consider the following 339-residue polypeptide: 1-aminocyclopropane-1-carboxylate deaminase (339 aa).

N6-(pyridoxal phosphate)lysine is present on lysine 52. Serine 79 serves as the catalytic Nucleophile.

This sequence belongs to the ACC deaminase/D-cysteine desulfhydrase family. Homotrimer. Pyridoxal 5'-phosphate serves as cofactor.

It catalyses the reaction 1-aminocyclopropane-1-carboxylate + H2O = 2-oxobutanoate + NH4(+). Catalyzes a cyclopropane ring-opening reaction, the irreversible conversion of 1-aminocyclopropane-1-carboxylate (ACC) to ammonia and alpha-ketobutyrate. Allows growth on ACC as a nitrogen source. This Rhizobium leguminosarum bv. viciae protein is 1-aminocyclopropane-1-carboxylate deaminase.